The primary structure comprises 552 residues: Elongator complex protein 3 (552 aa).

The Radical SAM core domain maps to 84 to 374; the sequence is RTASGIAVVA…YRVQRDIPMP (291 aa). [4Fe-4S] cluster is bound by residues cysteine 101, cysteine 111, and cysteine 114. Residues lysine 166, 476–479, 499–501, and tyrosine 532 contribute to the acetyl-CoA site; these read ELHV and FGM. Residues 398–552 enclose the N-acetyltransferase domain; sequence TTCRDVRTRE…YMSKSIEENN (155 aa).

The protein belongs to the ELP3 family. As to quaternary structure, component of the elongator complex composed of Elp1, Elp2, Elp3, Elp4, Elp5 and Elp6. The elongator complex associates with and stabilizes microtubules; efficient interaction requires the full complex. The cofactor is [4Fe-4S] cluster.

It localises to the cytoplasm. The protein resides in the nucleus. Its subcellular location is the cytoskeleton. The protein localises to the spindle. The catalysed reaction is uridine(34) in tRNA + acetyl-CoA + S-adenosyl-L-methionine + H2O = 5-(carboxymethyl)uridine(34) in tRNA + 5'-deoxyadenosine + L-methionine + CoA + 2 H(+). Its pathway is tRNA modification; 5-methoxycarbonylmethyl-2-thiouridine-tRNA biosynthesis. Its function is as follows. Catalytic tRNA acetyltransferase subunit of the elongator complex, which is required for multiple tRNA modifications, including mcm5U (5-methoxycarbonylmethyl uridine), mcm5s2U (5-methoxycarbonylmethyl-2-thiouridine), and ncm5U (5-carbamoylmethyl uridine). In the elongator complex, acts as a tRNA uridine(34) acetyltransferase by mediating formation of carboxymethyluridine in the wobble base at position 34 in tRNAs. Binding by the elongator complex stabilizes microtubules and promotes their growth. This induces central spindle asymmetry, promoting polarized signaling endosome trafficking during asymmetric cell division and cell fate assignation of sensory organ precursor cells. Plays a role in the control of synaptic bouton expansion. Required for larval development. Involved in protein synthesis-dependent long-term memory formation, probably as part of the elongator complex. The sequence is that of Elongator complex protein 3 from Drosophila melanogaster (Fruit fly).